A 320-amino-acid chain; its full sequence is Cytochrome f (320 aa).

The signal sequence occupies residues 1–35; it reads MQTRKTLSWIKEEITRSISVSLMIYIITGAYISNA. Residues tyrosine 36, cysteine 56, cysteine 59, and histidine 60 each coordinate heme. The helical transmembrane segment at 286–306 threads the bilayer; that stretch reads VQGLLFFLASVILAQIFLVLK.

It belongs to the cytochrome f family. As to quaternary structure, the 4 large subunits of the cytochrome b6-f complex are cytochrome b6, subunit IV (17 kDa polypeptide, petD), cytochrome f and the Rieske protein, while the 4 small subunits are PetG, PetL, PetM and PetN. The complex functions as a dimer. Requires heme as cofactor.

The protein localises to the plastid. It localises to the chloroplast thylakoid membrane. Its function is as follows. Component of the cytochrome b6-f complex, which mediates electron transfer between photosystem II (PSII) and photosystem I (PSI), cyclic electron flow around PSI, and state transitions. The sequence is that of Cytochrome f from Populus trichocarpa (Western balsam poplar).